A 225-amino-acid polypeptide reads, in one-letter code: THAP domain-containing protein 1 A (225 aa).

Residues 5–57 (CSAYGCKNRYDKDKPISFHKFPLKRPLLCKKWEAAVRRAEFKPTKYSSICSDH) form a THAP-type zinc finger. Residues 139-194 (VEDTVHQRRRIQQLEEQVDKLRKKLKIANQKCRRQERSLEKLEREVSEYREAKGSG) are a coiled coil.

Belongs to the THAP1 family.

The protein localises to the nucleus. Its subcellular location is the nucleoplasm. Its function is as follows. DNA-binding transcription regulator that regulates endothelial cell proliferation and G1/S cell-cycle progression. Specifically binds the 5'-[AT]NTNN[GT]GGCA[AGT]-3' core DNA sequence and acts by modulating expression of pRB-E2F cell-cycle target genes. This Xenopus laevis (African clawed frog) protein is THAP domain-containing protein 1 A (thap1-a).